We begin with the raw amino-acid sequence, 24 residues long: Coenzyme PQQ synthesis protein A (24 aa).

Positions 16 to 20 (EITMY) form a cross-link, pyrroloquinoline quinone (Glu-Tyr).

This sequence belongs to the PqqA family.

Its pathway is cofactor biosynthesis; pyrroloquinoline quinone biosynthesis. Its function is as follows. Required for coenzyme pyrroloquinoline quinone (PQQ) biosynthesis. PQQ is probably formed by cross-linking a specific glutamate to a specific tyrosine residue and excising these residues from the peptide. In Variovorax paradoxus (strain S110), this protein is Coenzyme PQQ synthesis protein A.